Reading from the N-terminus, the 662-residue chain is Probable actin-related protein 8 (662 aa).

2 stretches are compositionally biased toward basic and acidic residues: residues 50-59 and 67-77; these read AGEKDAKETE and TKQDDSKKSQV. Residues 50–92 are disordered; that stretch reads AGEKDAKETESESANGDTKQDDSKKSQVEEEEDGIEESELGEE. Acidic residues predominate over residues 78–89; that stretch reads EEEEDGIEESEL. 339 to 342 lines the ATP pocket; that stretch reads DMGA.

It belongs to the actin family. In terms of assembly, component of the chromatin remodeling Ino80 complex. Exists as monomers and dimers, but the dimer is most probably the biologically relevant form required for stable interactions with histones that exploits the twofold symmetry of the nucleosome core.

The protein resides in the nucleus. In terms of biological role, probably involved in transcription regulation via its interaction with the INO80 complex, a chromatin remodeling complex. Exhibits low basal ATPase activity, and unable to polymerize. Strongly prefer nucleosomes and H3-H4 tetramers over H2A-H2B dimers, suggesting it may act as a nucleosome recognition module within the complex. The sequence is that of Probable actin-related protein 8 from Schizosaccharomyces pombe (strain 972 / ATCC 24843) (Fission yeast).